The sequence spans 347 residues: Isopentenyl-diphosphate delta-isomerase (347 aa).

A substrate-binding site is contributed by 9–10 (RK). FMN-binding positions include 65-67 (AMT), Ser-95, and Asn-124. 95-97 (STH) contributes to the substrate binding site. Residue Gln-154 coordinates substrate. Residue Glu-155 participates in Mg(2+) binding. FMN-binding positions include Lys-186, Ser-211, Thr-216, 262 to 264 (GVR), and 283 to 284 (SR).

Belongs to the IPP isomerase type 2 family. Homooctamer. Dimer of tetramers. FMN is required as a cofactor. The cofactor is NADPH. Mg(2+) serves as cofactor.

It is found in the cytoplasm. The catalysed reaction is isopentenyl diphosphate = dimethylallyl diphosphate. Functionally, involved in the biosynthesis of isoprenoids. Catalyzes the 1,3-allylic rearrangement of the homoallylic substrate isopentenyl (IPP) to its allylic isomer, dimethylallyl diphosphate (DMAPP). The polypeptide is Isopentenyl-diphosphate delta-isomerase (Staphylococcus saprophyticus subsp. saprophyticus (strain ATCC 15305 / DSM 20229 / NCIMB 8711 / NCTC 7292 / S-41)).